Consider the following 99-residue polypeptide: Small ribosomal subunit protein bS20 (99 aa).

This sequence belongs to the bacterial ribosomal protein bS20 family.

Its function is as follows. Binds directly to 16S ribosomal RNA. The protein is Small ribosomal subunit protein bS20 of Thermotoga neapolitana (strain ATCC 49049 / DSM 4359 / NBRC 107923 / NS-E).